We begin with the raw amino-acid sequence, 170 residues long: APRG1 tumor suppressor candidate (170 aa).

A helical membrane pass occupies residues 150–170; sequence IALALAGPGAILILELSWFLG.

In terms of tissue distribution, expressed at high levels in the pancreas and placenta. As to expression, expressed at high levels in the kidney.

It is found in the membrane. The chain is APRG1 tumor suppressor candidate from Homo sapiens (Human).